The sequence spans 173 residues: Small ribosomal subunit protein uS5 (173 aa).

Residues 17–80 enclose the S5 DRBM domain; that stretch reads WQERVIQIRR…ADGKKQLIEV (64 aa).

This sequence belongs to the universal ribosomal protein uS5 family. In terms of assembly, part of the 30S ribosomal subunit. Contacts proteins S4 and S8.

With S4 and S12 plays an important role in translational accuracy. In terms of biological role, located at the back of the 30S subunit body where it stabilizes the conformation of the head with respect to the body. The sequence is that of Small ribosomal subunit protein uS5 from Synechocystis sp. (strain ATCC 27184 / PCC 6803 / Kazusa).